Reading from the N-terminus, the 107-residue chain is U1-lycotoxin-Ls1b (107 aa).

Positions 1 to 20 (MMKVLVVVALLVTHISYSSS) are cleaved as a signal peptide. The propeptide occupies 21–41 (EGIDDLEADELLSLMANEQTR). Intrachain disulfides connect cysteine 44–cysteine 59, cysteine 51–cysteine 68, cysteine 58–cysteine 86, and cysteine 70–cysteine 84.

Belongs to the neurotoxin 19 (CSTX) family. 04 (U1-Lctx) subfamily. In terms of tissue distribution, expressed by the venom gland.

The protein localises to the secreted. The sequence is that of U1-lycotoxin-Ls1b from Lycosa singoriensis (Wolf spider).